The chain runs to 148 residues: uncharacterized protein (148 aa).

A run of 3 helical transmembrane segments spans residues 25 to 45 (FCTV…LLTA), 85 to 105 (IVRF…LLYL), and 118 to 138 (LAAT…WVFG).

The protein belongs to the GtrA family.

The protein localises to the cell membrane. This is an uncharacterized protein from Bacillus subtilis (strain 168).